Here is an 837-residue protein sequence, read N- to C-terminus: Anaphase-promoting complex subunit 4 (837 aa).

Composition is skewed to low complexity over residues 59–81 and 547–581; these read NDNN…NDNN and SSSS…NNNN. Disordered stretches follow at residues 59-89 and 547-588; these read NDNN…KSNK and SSSS…QSGN.

The protein belongs to the APC4 family. In terms of assembly, the APC/C is composed of at least 13 subunits that stay tightly associated throughout the cell cycle: anapc1, anapc2, anapc3, anapc4, anapc5, anapc6, anapc7, anapc8, anapc10, anapc11, cdc20, cdc26 and cdh1.

The protein localises to the nucleus. It functions in the pathway protein modification; protein ubiquitination. Functionally, component of the anaphase promoting complex/cyclosome (APC/C), a cell cycle-regulated E3 ubiquitin-protein ligase complex that controls progression through mitosis and the G1 phase of the cell cycle. This chain is Anaphase-promoting complex subunit 4 (anapc4), found in Dictyostelium discoideum (Social amoeba).